We begin with the raw amino-acid sequence, 88 residues long: Small ribosomal subunit protein bS20 (88 aa).

The segment covering 1–17 has biased composition (basic and acidic residues); sequence MANIKSNEKRLRQDIKR. The interval 1–25 is disordered; that stretch reads MANIKSNEKRLRQDIKRNLNNKGQK.

This sequence belongs to the bacterial ribosomal protein bS20 family.

Its function is as follows. Binds directly to 16S ribosomal RNA. In Mycoplasma genitalium (strain ATCC 33530 / DSM 19775 / NCTC 10195 / G37) (Mycoplasmoides genitalium), this protein is Small ribosomal subunit protein bS20.